Here is a 151-residue protein sequence, read N- to C-terminus: MLP-like protein 328 (151 aa).

It belongs to the MLP family.

The chain is MLP-like protein 328 (MLP328) from Arabidopsis thaliana (Mouse-ear cress).